The chain runs to 4579 residues: Sacsin (4579 aa).

In terms of domain architecture, Ubiquitin-like spans 9 to 84 (VPVTVLPGCV…FVNLQSKGLK (76 aa)). Position 943 is an N6-acetyllysine (K943). Phosphoserine is present on residues S1779 and S2511. T2516 carries the post-translational modification Phosphothreonine. S3435 is modified (phosphoserine). Disordered regions lie at residues 4248-4273 (PEESSQSRDSAPSTPTSPTEFLTPGL) and 4279-4298 (LFSGRESHKTSSKHQSPKKL). Polar residues predominate over residues 4254 to 4267 (SRDSAPSTPTSPTE). Phosphothreonine is present on T4261. S4264 is subject to Phosphoserine. The segment covering 4288–4298 (TSSKHQSPKKL) has biased composition (basic residues). The region spanning 4306–4393 (ILKEVTSVVE…ASRFQSDKYS (88 aa)) is the J domain. The segment at 4405–4427 (ATSHKSERQQQNKEKCPPSAGQT) is disordered. Positions 4406–4420 (TSHKSERQQQNKEKC) are enriched in basic and acidic residues. In terms of domain architecture, HEPN spans 4451–4567 (LRQARANFSA…MRVMECTACI (117 aa)).

Highly expressed in the central nervous system. Also found in skeletal muscle and at low levels in pancreas.

The protein localises to the cytoplasm. Co-chaperone which acts as a regulator of the Hsp70 chaperone machinery and may be involved in the processing of other ataxia-linked proteins. In Homo sapiens (Human), this protein is Sacsin (SACS).